A 102-amino-acid chain; its full sequence is Large ribosomal subunit protein bL21 (102 aa).

Belongs to the bacterial ribosomal protein bL21 family. In terms of assembly, part of the 50S ribosomal subunit. Contacts protein L20.

This protein binds to 23S rRNA in the presence of protein L20. This is Large ribosomal subunit protein bL21 from Geobacillus thermodenitrificans (strain NG80-2).